The following is a 616-amino-acid chain: ATP-dependent RNA helicase VAD1 (616 aa).

The disordered stretch occupies residues 1–35; that stretch reads MASSSTLANDDWKQGLAAPPKDLRPQTEDVTATQG. The Q motif signature appears at 36 to 64; sequence SRFEDFGLRRELLMGIYTAGFERPSPIQE. In terms of domain architecture, Helicase ATP-binding spans 67 to 238; it reads IPMALTGRDI…DQHMVQPYEI (172 aa). 80 to 87 serves as a coordination point for ATP; it reads AKNGTGKT. The short motif at 186–189 is the DEAD box element; sequence DEAD. Residues 248–408 enclose the Helicase C-terminal domain; that stretch reads GVTQYYAYVE…PIPAVIDPVL (161 aa). Residues 416-616 are disordered; that stretch reads EEERESPPPK…GASQSQQAQA (201 aa). Low complexity-rich tracts occupy residues 427–441, 458–500, and 508–523; these read AAIAAPPAQQQPQQR, PAAA…NSSP, and YPQQAPTQAQGPAQMQ. Residues 529 to 545 show a composition bias toward polar residues; that stretch reads PATQPQASAQIPVQGQT. Composition is skewed to low complexity over residues 550–579 and 606–616; these read PRAQQQGQQQPSQPGQAEGQSQPNRRPNTG and AGASQSQQAQA.

It belongs to the DEAD box helicase family. DDX6/DHH1 subfamily.

It localises to the cytoplasm. Its subcellular location is the P-body. It carries out the reaction ATP + H2O = ADP + phosphate + H(+). In terms of biological role, ATP-dependent RNA helicase involved in mRNA turnover, and more specifically in mRNA decapping. Is involved in G1/S DNA-damage checkpoint recovery, probably through the regulation of the translational status of a subset of mRNAs. May also have a role in translation and mRNA nuclear export. Blocks autophagy in nutrient-rich conditions by, at least partly, binding and repressing the expression of a set of ATG genes, including ATG3, ATG7, ATG8, ATG19, ATG20 and ATG22. VAD1-mediated repression of autophagy is regulated by TOR-dependent phosphorylation of the decapping enzyme DCP2. Regulates multiple virulence-associated genes. Repression of autophagy by VAD1 also regulates the pathogenesis. The sequence is that of ATP-dependent RNA helicase VAD1 from Cryptococcus neoformans var. grubii serotype A (strain H99 / ATCC 208821 / CBS 10515 / FGSC 9487) (Filobasidiella neoformans var. grubii).